Here is a 324-residue protein sequence, read N- to C-terminus: 26S proteasome non-ATPase regulatory subunit 7 (324 aa).

Residues 9–144 (VVVHPLVLLS…TEAYISVEEV (136 aa)) form the MPN domain. A Glycyl lysine isopeptide (Lys-Gly) (interchain with G-Cter in ubiquitin) cross-link involves residue K180. N6-acetyllysine occurs at positions 204, 214, 316, and 317. Positions 281-324 (ANRDAEKKEGQEKEESKKDRKEDKEKDKDKEKSDVKKEEKKEKK) are disordered.

The protein belongs to the peptidase M67A family. Component of the 19S proteasome regulatory particle complex. The 26S proteasome consists of a 20S core particle (CP) and two 19S regulatory subunits (RP). The regulatory particle is made of a lid composed of 9 subunits including PSMD7, a base containing 6 ATPases and few additional components. Within the complex, PSMD7 interacts with subunit PSMD4 through their respective MPN domain. Interacts with TRIM5.

In terms of biological role, component of the 26S proteasome, a multiprotein complex involved in the ATP-dependent degradation of ubiquitinated proteins. This complex plays a key role in the maintenance of protein homeostasis by removing misfolded or damaged proteins, which could impair cellular functions, and by removing proteins whose functions are no longer required. Therefore, the proteasome participates in numerous cellular processes, including cell cycle progression, apoptosis, or DNA damage repair. This Homo sapiens (Human) protein is 26S proteasome non-ATPase regulatory subunit 7 (PSMD7).